The sequence spans 417 residues: Gamma-glutamyl phosphate reductase (417 aa).

This sequence belongs to the gamma-glutamyl phosphate reductase family.

The protein localises to the cytoplasm. It carries out the reaction L-glutamate 5-semialdehyde + phosphate + NADP(+) = L-glutamyl 5-phosphate + NADPH + H(+). The protein operates within amino-acid biosynthesis; L-proline biosynthesis; L-glutamate 5-semialdehyde from L-glutamate: step 2/2. Its function is as follows. Catalyzes the NADPH-dependent reduction of L-glutamate 5-phosphate into L-glutamate 5-semialdehyde and phosphate. The product spontaneously undergoes cyclization to form 1-pyrroline-5-carboxylate. The polypeptide is Gamma-glutamyl phosphate reductase (Shigella flexneri serotype 5b (strain 8401)).